A 426-amino-acid polypeptide reads, in one-letter code: Glutamate-1-semialdehyde 2,1-aminomutase (426 aa).

K265 bears the N6-(pyridoxal phosphate)lysine mark.

Belongs to the class-III pyridoxal-phosphate-dependent aminotransferase family. HemL subfamily. As to quaternary structure, homodimer. It depends on pyridoxal 5'-phosphate as a cofactor.

The protein localises to the cytoplasm. The enzyme catalyses (S)-4-amino-5-oxopentanoate = 5-aminolevulinate. The protein operates within porphyrin-containing compound metabolism; protoporphyrin-IX biosynthesis; 5-aminolevulinate from L-glutamyl-tRNA(Glu): step 2/2. The polypeptide is Glutamate-1-semialdehyde 2,1-aminomutase (Salmonella enteritidis PT4 (strain P125109)).